The sequence spans 58 residues: Small ribosomal subunit protein bS21 (58 aa).

The segment at 36-58 is disordered; sequence EFYEKPSVKRKRKSEAARKRKKF. The span at 43–58 shows a compositional bias: basic residues; it reads VKRKRKSEAARKRKKF.

Belongs to the bacterial ribosomal protein bS21 family.

The chain is Small ribosomal subunit protein bS21 from Streptococcus uberis (strain ATCC BAA-854 / 0140J).